The sequence spans 132 residues: uncharacterized protein (132 aa).

2 disordered regions span residues Gly36–Ser69 and Gln97–Arg132. Ser101 is subject to Phosphoserine.

Copurifies with proteins HOL1, MMP1, PEX7 and PLB1.

This is an uncharacterized protein from Saccharomyces cerevisiae (strain ATCC 204508 / S288c) (Baker's yeast).